The primary structure comprises 451 residues: Protein-tyrosine kinase 6 (451 aa).

Positions 8–72 constitute an SH3 domain; that stretch reads HLGPKYVGLW…PHNYLAERET (65 aa). A phosphotyrosine; by autocatalysis mark is found at tyrosine 13, tyrosine 61, tyrosine 66, and tyrosine 114. The SH2 domain maps to 78-170; it reads WFFGCISRSE…SHGLRLAAPC (93 aa). Residues 171–190 are linker; that stretch reads RKHEPEPLPHWDDWERPREE. The Protein kinase domain maps to 191-445; it reads FTLCRKLGSG…ALRERLSSFT (255 aa). ATP-binding positions include 197–205 and lysine 219; that span reads LGSGYFGEV. The Proton acceptor role is filled by aspartate 312. Residues tyrosine 342 and tyrosine 351 each carry the phosphotyrosine; by autocatalysis modification. Tyrosine 447 is subject to Phosphotyrosine.

It belongs to the protein kinase superfamily. Tyr protein kinase family. BRK/PTK6/SIK subfamily. As to quaternary structure, interacts with GAP-A.p65. Interacts (via SH3 and SH2 domains) with KHDRBS1. Interacts (via SH3 and SH2 domains) with phosphorylated IRS4. Interacts with ADAM15. Interacts (via SH3 domain) with SFPQ. Interacts with EGFR and ERBB2. Interacts with STAP2. Interacts with PNX. Interacts with SFPQ. Interacts with PTK/ATK. Interacts with CTNNB1. In terms of processing, autophosphorylated. Autophosphorylation of Tyr-342 leads to an increase of kinase activity. Tyr-447 binds to the SH2 domain when phosphorylated and negatively regulates kinase activity. In terms of tissue distribution, epithelia-specific. Very high level in colon and high levels in small intestine and prostate, and low levels in some fetal tissues. Not expressed in breast or ovarian tissue but expressed in high percentage of breast and ovarian cancers. Also overexpressed in some metastatic melanomas, lymphomas, colon cancers, squamous cell carcinomas and prostate cancers. Also found in melanocytes. Not expressed in heart, brain, placenta, lung, liver, skeletal muscle, kidney and pancreas. Isoform 2 is present in prostate epithelial cell lines derived from normal prostate and prostate adenocarcinomas, as well as in a variety of cell lines.

It is found in the cytoplasm. It localises to the nucleus. Its subcellular location is the cell projection. The protein resides in the ruffle. The protein localises to the membrane. It catalyses the reaction L-tyrosyl-[protein] + ATP = O-phospho-L-tyrosyl-[protein] + ADP + H(+). Activated by EGF, NRG1 and IGF1. Inhibited by SOCS3 to phosphorylate STAT3. Stabilized in the inactive form by an association between the SH3 domain and the SH2-TK linker region. Interaction between Trp-184 within SH2-TK linker region and the catalytic domain appears essential for positive regulation of kinase activity. In terms of biological role, non-receptor tyrosine-protein kinase implicated in the regulation of a variety of signaling pathways that control the differentiation and maintenance of normal epithelia, as well as tumor growth. Function seems to be context dependent and differ depending on cell type, as well as its intracellular localization. A number of potential nuclear and cytoplasmic substrates have been identified. These include the RNA-binding proteins: KHDRBS1/SAM68, KHDRBS2/SLM1, KHDRBS3/SLM2 and SFPQ/PSF; transcription factors: STAT3 and STAT5A/B and a variety of signaling molecules: ARHGAP35/p190RhoGAP, PXN/paxillin, BTK/ATK, STAP2/BKS. Phosphorylates the GTPase-activating protein ARAP1 following EGF stimulation which enhances EGFR signaling by delaying EGFR down-regulation. Also associates with a variety of proteins that are likely upstream of PTK6 in various signaling pathways, or for which PTK6 may play an adapter-like role. These proteins include ADAM15, EGFR, ERBB2, ERBB3 and IRS4. In normal or non-tumorigenic tissues, PTK6 promotes cellular differentiation and apoptosis. In tumors PTK6 contributes to cancer progression by sensitizing cells to mitogenic signals and enhancing proliferation, anchorage-independent survival and migration/invasion. Association with EGFR, ERBB2, ERBB3 may contribute to mammary tumor development and growth through enhancement of EGF-induced signaling via BTK/AKT and PI3 kinase. Contributes to migration and proliferation by contributing to EGF-mediated phosphorylation of ARHGAP35/p190RhoGAP, which promotes association with RASA1/p120RasGAP, inactivating RhoA while activating RAS. EGF stimulation resulted in phosphorylation of PNX/Paxillin by PTK6 and activation of RAC1 via CRK/CrKII, thereby promoting migration and invasion. PTK6 activates STAT3 and STAT5B to promote proliferation. Nuclear PTK6 may be important for regulating growth in normal epithelia, while cytoplasmic PTK6 might activate oncogenic signaling pathways. Inhibits PTK6 phosphorylation and PTK6 association with other tyrosine-phosphorylated proteins. This chain is Protein-tyrosine kinase 6 (PTK6), found in Homo sapiens (Human).